Consider the following 254-residue polypeptide: Phosphoribosylaminoimidazole-succinocarboxamide synthase 1 (254 aa).

It belongs to the SAICAR synthetase family.

The catalysed reaction is 5-amino-1-(5-phospho-D-ribosyl)imidazole-4-carboxylate + L-aspartate + ATP = (2S)-2-[5-amino-1-(5-phospho-beta-D-ribosyl)imidazole-4-carboxamido]succinate + ADP + phosphate + 2 H(+). The protein operates within purine metabolism; IMP biosynthesis via de novo pathway; 5-amino-1-(5-phospho-D-ribosyl)imidazole-4-carboxamide from 5-amino-1-(5-phospho-D-ribosyl)imidazole-4-carboxylate: step 1/2. The sequence is that of Phosphoribosylaminoimidazole-succinocarboxamide synthase 1 (purC1) from Agrobacterium fabrum (strain C58 / ATCC 33970) (Agrobacterium tumefaciens (strain C58)).